We begin with the raw amino-acid sequence, 380 residues long: 3-isopropylmalate dehydrogenase (380 aa).

79–90 (GPEWAGVHPTPE) lines the NAD(+) pocket. Residues Arg-97, Arg-107, Arg-136, and Asp-229 each coordinate substrate. Residues Asp-229, Asp-254, and Asp-258 each coordinate Mg(2+). Residue 294–306 (GSAPDISGKGLAN) participates in NAD(+) binding.

The protein belongs to the isocitrate and isopropylmalate dehydrogenases family. Homodimer. It depends on Mg(2+) as a cofactor. Mn(2+) is required as a cofactor.

It localises to the cytoplasm. The enzyme catalyses (2R,3S)-3-isopropylmalate + NAD(+) = 4-methyl-2-oxopentanoate + CO2 + NADH. The protein operates within amino-acid biosynthesis; L-leucine biosynthesis; L-leucine from 3-methyl-2-oxobutanoate: step 3/4. Functionally, catalyzes the oxidation of 3-carboxy-2-hydroxy-4-methylpentanoate (3-isopropylmalate) to 3-carboxy-4-methyl-2-oxopentanoate. The product decarboxylates to 4-methyl-2 oxopentanoate. The protein is 3-isopropylmalate dehydrogenase (LEU2) of Hapsidospora chrysogena (Acremonium chrysogenum).